We begin with the raw amino-acid sequence, 276 residues long: MAKQARAVQTWRSIVDAAASVFDDYGYERAAISEILRRAKVTKGALYFHFASKEAIAQAIMDEQTSTVEFEQEGSPLQSLVDGGQQFAFALRHNSMARAGTRLSIEGVFLGGPHPWGDWIDATARMLELGQERGEVFPQIDPMVSAKIIVASFTGIQLVSEADSGRADLRGQVAEMWRHILPSIAHPGVIAHIKPEGRVDLAAQAREKAEREEQEARIAAEAKGAGSDAATDSGSRSGGSGLRGGGSGRGPRAGGAGDEGDEEPAGAGVAAGGVVA.

Residues Val-8 to Val-68 enclose the HTH tetR-type domain. Positions Ala-31–Phe-50 form a DNA-binding region, H-T-H motif. Positions Glu-207 to Ala-220 are enriched in basic and acidic residues. The disordered stretch occupies residues Glu-207–Ala-276. Residues Glu-221 to Ser-235 show a composition bias toward low complexity. Gly residues predominate over residues Arg-236–Gly-257.

In terms of assembly, homodimer or multimer. Binds to both DNA and A-factor as a homodimer.

It is found in the cytoplasm. Functionally, represses adpA expression by binding to the promoter region in the absence of A-factor, causing repression of streptomycin production and of sporulation. This is A-factor receptor protein (arpA) from Streptomyces griseus.